We begin with the raw amino-acid sequence, 324 residues long: tRNA pseudouridine synthase B (324 aa).

His43 provides a ligand contact to substrate. The active-site Nucleophile is the Asp48. Residues Tyr76, Tyr179, and Leu200 each contribute to the substrate site.

It belongs to the pseudouridine synthase TruB family. Type 1 subfamily.

The enzyme catalyses uridine(55) in tRNA = pseudouridine(55) in tRNA. In terms of biological role, responsible for synthesis of pseudouridine from uracil-55 in the psi GC loop of transfer RNAs. This chain is tRNA pseudouridine synthase B, found in Yersinia pestis bv. Antiqua (strain Nepal516).